Reading from the N-terminus, the 97-residue chain is HssA/B-like protein 27 (97 aa).

The protein belongs to the hssA/B family.

This chain is HssA/B-like protein 27 (hssl27), found in Dictyostelium discoideum (Social amoeba).